A 449-amino-acid polypeptide reads, in one-letter code: FAD-linked oxidoreductase janO (449 aa).

The FAD-binding PCMH-type domain maps to proline 32–leucine 203.

It belongs to the oxygen-dependent FAD-linked oxidoreductase family. It depends on FAD as a cofactor.

It functions in the pathway secondary metabolite biosynthesis. Functionally, FAD-linked oxidoreductase; part of the gene cluster that mediates the biosynthesis of the indole diterpenes janthitremanes such as shearinine K or shearinine A. The geranylgeranyl diphosphate (GGPP) synthase janG catalyzes the first step in janthitremane biosynthesis via conversion of farnesyl pyrophosphate and isopentyl pyrophosphate into geranylgeranyl pyrophosphate (GGPP). Condensation of indole-3-glycerol phosphate with GGPP by the prenyl transferase janC then forms 3-geranylgeranylindole (3-GGI). Epoxidation by the FAD-dependent monooxygenase janM leads to a epoxidized-GGI that is substrate of the terpene cyclase janB for cyclization to yield paspaline. Paspaline is subsequently converted to 13-desoxypaspaline by the cytochrome P450 monooxygenase janP, via beta-PC-M6 in a series of alpha-face oxidations. The cytochrome P450 monooxygenase janQ is proposed to carry out sequential beta-face oxidation steps at C-7 and C-13 of 13-desoxypaspaline to form paspalicine and paspalinine respectively. The indole diterpene prenyltransferase janD may then convert paspalinine into shearinine K which is substrate of janO and/or additional enzymes for oxidation and cyclization to generate shearinine A. In Penicillium janthinellum (Penicillium vitale), this protein is FAD-linked oxidoreductase janO.